Reading from the N-terminus, the 393-residue chain is Homoserine O-succinyltransferase (393 aa).

Residues 62–372 (NAVLVCHALN…PHGHDAFLLD (311 aa)) form the AB hydrolase-1 domain. Residue S168 is the Nucleophile of the active site. R238 is a substrate binding site. Catalysis depends on residues D333 and H366. D367 provides a ligand contact to substrate.

It belongs to the AB hydrolase superfamily. MetX family. In terms of assembly, homodimer.

The protein localises to the cytoplasm. It carries out the reaction L-homoserine + succinyl-CoA = O-succinyl-L-homoserine + CoA. It functions in the pathway amino-acid biosynthesis; L-methionine biosynthesis via de novo pathway; O-succinyl-L-homoserine from L-homoserine: step 1/1. Transfers a succinyl group from succinyl-CoA to L-homoserine, forming succinyl-L-homoserine. The chain is Homoserine O-succinyltransferase from Cupriavidus necator (strain ATCC 17699 / DSM 428 / KCTC 22496 / NCIMB 10442 / H16 / Stanier 337) (Ralstonia eutropha).